The chain runs to 197 residues: UPF0462 protein C4orf33 homolog (197 aa).

It belongs to the UPF0462 family.

This Danio rerio (Zebrafish) protein is UPF0462 protein C4orf33 homolog.